The primary structure comprises 879 residues: Leucine--tRNA ligase (879 aa).

Positions 45 to 55 match the 'HIGH' region motif; that stretch reads PYPSGALHMGH. The short motif at 637-641 is the 'KMSKS' region element; sequence KMSKS. Position 640 (lysine 640) interacts with ATP.

The protein belongs to the class-I aminoacyl-tRNA synthetase family.

It is found in the cytoplasm. The catalysed reaction is tRNA(Leu) + L-leucine + ATP = L-leucyl-tRNA(Leu) + AMP + diphosphate. This is Leucine--tRNA ligase from Xylella fastidiosa (strain M12).